A 287-amino-acid chain; its full sequence is Cell wall-binding protein YocH (287 aa).

A signal peptide spans 1-25; sequence MKKTIMSFVAVAALSTTAFGAHASA. 2 consecutive LysM domains span residues 26–69 and 78–121; these read KEIT…KLTI and GQYT…TLSV. Residues 130 to 143 show a composition bias toward low complexity; it reads TATENAQTNAPQAA. The segment at 130 to 193 is disordered; the sequence is TATENAQTNA…SNTNNQEASK (64 aa). Residues 165-181 are compositionally biased toward basic and acidic residues; sequence QETKAEAETSVNTEEKA. A compositionally biased stretch (polar residues) spans 182-193; that stretch reads VQSNTNNQEASK.

The protein resides in the secreted. It localises to the cell wall. The protein is Cell wall-binding protein YocH (yocH) of Bacillus subtilis (strain 168).